The following is a 202-amino-acid chain: ATP-dependent Clp protease proteolytic subunit 1 (202 aa).

The active-site Nucleophile is the Ser-99. The active site involves His-123.

The protein belongs to the peptidase S14 family. In terms of assembly, fourteen ClpP subunits assemble into 2 heptameric rings which stack back to back to give a disk-like structure with a central cavity, resembling the structure of eukaryotic proteasomes.

Its subcellular location is the cytoplasm. It catalyses the reaction Hydrolysis of proteins to small peptides in the presence of ATP and magnesium. alpha-casein is the usual test substrate. In the absence of ATP, only oligopeptides shorter than five residues are hydrolyzed (such as succinyl-Leu-Tyr-|-NHMec, and Leu-Tyr-Leu-|-Tyr-Trp, in which cleavage of the -Tyr-|-Leu- and -Tyr-|-Trp bonds also occurs).. Cleaves peptides in various proteins in a process that requires ATP hydrolysis. Has a chymotrypsin-like activity. Plays a major role in the degradation of misfolded proteins. This chain is ATP-dependent Clp protease proteolytic subunit 1, found in Symbiobacterium thermophilum (strain DSM 24528 / JCM 14929 / IAM 14863 / T).